A 424-amino-acid chain; its full sequence is UDP-N-acetylglucosamine 1-carboxyvinyltransferase (424 aa).

22–23 (KN) serves as a coordination point for phosphoenolpyruvate. Arg-98 contributes to the UDP-N-acetyl-alpha-D-glucosamine binding site. The active-site Proton donor is the Cys-122. Residue Cys-122 is modified to 2-(S-cysteinyl)pyruvic acid O-phosphothioketal. UDP-N-acetyl-alpha-D-glucosamine is bound by residues 127 to 131 (RPVDQ), Asp-312, and Ile-334.

This sequence belongs to the EPSP synthase family. MurA subfamily.

The protein resides in the cytoplasm. The enzyme catalyses phosphoenolpyruvate + UDP-N-acetyl-alpha-D-glucosamine = UDP-N-acetyl-3-O-(1-carboxyvinyl)-alpha-D-glucosamine + phosphate. It participates in cell wall biogenesis; peptidoglycan biosynthesis. Functionally, cell wall formation. Adds enolpyruvyl to UDP-N-acetylglucosamine. The sequence is that of UDP-N-acetylglucosamine 1-carboxyvinyltransferase from Xanthomonas euvesicatoria pv. vesicatoria (strain 85-10) (Xanthomonas campestris pv. vesicatoria).